Consider the following 456-residue polypeptide: PTS system sucrose-specific EIIBC component (456 aa).

The region spanning 4–87 (EQISRSLLPL…IQAAGISESS (84 aa)) is the PTS EIIB type-1 domain. The active-site Phosphocysteine intermediate; for EIIB activity is the Cys-26. A PTS EIIC type-1 domain is found at 107 to 456 (RLLSNIFVPI…LTLKYKTDAE (350 aa)). A run of 10 helical transmembrane segments spans residues 112-132 (IFVP…LLGM), 144-164 (ALYI…PILI), 181-201 (TLGG…AAGF), 209-229 (IEVA…AVWF), 247-267 (LILT…LLIG), 288-308 (AGWL…ITGI), 329-349 (FLLP…FAVW), 360-380 (ITLP…IFGI), 388-408 (FIAA…MHVY), and 428-448 (LLNY…LSLT).

It localises to the cell inner membrane. The enzyme catalyses N(pros)-phospho-L-histidyl-[protein](out) + sucrose = sucrose 6(G)-phosphate(in) + L-histidyl-[protein]. In terms of biological role, the phosphoenolpyruvate-dependent sugar phosphotransferase system (sugar PTS), a major carbohydrate active transport system, catalyzes the phosphorylation of incoming sugar substrates concomitantly with their translocation across the cell membrane. This system is involved in sucrose transport. In Klebsiella pneumoniae, this protein is PTS system sucrose-specific EIIBC component.